The following is a 228-amino-acid chain: Urease accessory protein UreF (228 aa).

The protein belongs to the UreF family. As to quaternary structure, ureD, UreF and UreG form a complex that acts as a GTP-hydrolysis-dependent molecular chaperone, activating the urease apoprotein by helping to assemble the nickel containing metallocenter of UreC. The UreE protein probably delivers the nickel.

It localises to the cytoplasm. In terms of biological role, required for maturation of urease via the functional incorporation of the urease nickel metallocenter. This Prochlorococcus marinus (strain MIT 9215) protein is Urease accessory protein UreF.